A 325-amino-acid chain; its full sequence is Eukaryotic translation initiation factor 3 subunit I (325 aa).

WD repeat units lie at residues 8–47 (GHERSITQIKYNREGDLLFTVAKDPIVNVWYSVNGERLGT), 50–89 (GHTGAVWCVDADWDTRHVLTGSADNSCRLWDCETGKQLAL), 144–183 (CSDSKITSAVWGPLGEFIIAGHENGELNQFSAKSGEQLSN), 186–225 (EHTKQINDIQTSRDMTMFITASKDNTAKLFDCTSLKHLKT), and 283–324 (GHFG…FEFE).

This sequence belongs to the eIF-3 subunit I family. Component of the eukaryotic translation initiation factor 3 (eIF-3) complex, which is composed of 13 subunits: EIF3A, EIF3B, EIF3C, EIF3D, EIF3E, EIF3F, EIF3G, EIF3H, EIF3I, EIF3J, EIF3K, EIF3L and EIF3M.

The protein resides in the cytoplasm. Functionally, component of the eukaryotic translation initiation factor 3 (eIF-3) complex, which is involved in protein synthesis of a specialized repertoire of mRNAs and, together with other initiation factors, stimulates binding of mRNA and methionyl-tRNAi to the 40S ribosome. The eIF-3 complex specifically targets and initiates translation of a subset of mRNAs involved in cell proliferation. The protein is Eukaryotic translation initiation factor 3 subunit I of Taeniopygia guttata (Zebra finch).